The chain runs to 232 residues: MENQPKLNSSKEVIAFLAERFPHCFSAEGEARPLKIGIFQDLVDRVAGEMSLSKTQLRSALRLYTSSWRYLYGVKPGATRVDLDGNPCGELDEQHVEHARKQLEEAKARVQAQRAEQQAKKREAAAAAGEKEDAPRRERKPRPTTPRRKEGAERKPRAQKPVEKAPKTVKAPREEQHTPVSDISALTVGQALKVKAGQNAMDATVLEITKDGVRVQLNSGMSLIVRAEHLVF.

Residues 105–182 (EAKARVQAQR…REEQHTPVSD (78 aa)) are disordered. A compositionally biased stretch (basic and acidic residues) spans 117 to 136 (QQAKKREAAAAAGEKEDAPR). A compositionally biased stretch (basic residues) spans 137 to 146 (RERKPRPTTP). Basic and acidic residues predominate over residues 147–177 (RRKEGAERKPRAQKPVEKAPKTVKAPREEQH).

It belongs to the ProQ family.

It is found in the cytoplasm. In terms of biological role, RNA chaperone with significant RNA binding, RNA strand exchange and RNA duplexing activities. May regulate ProP activity through an RNA-based, post-transcriptional mechanism. In Shigella flexneri serotype 5b (strain 8401), this protein is RNA chaperone ProQ.